The primary structure comprises 138 residues: Putative pre-16S rRNA nuclease (138 aa).

The protein belongs to the YqgF nuclease family.

Its subcellular location is the cytoplasm. Could be a nuclease involved in processing of the 5'-end of pre-16S rRNA. The protein is Putative pre-16S rRNA nuclease of Helicobacter hepaticus (strain ATCC 51449 / 3B1).